The primary structure comprises 153 residues: Catabolic 3-dehydroquinase (153 aa).

Tyrosine 24 functions as the Proton acceptor in the catalytic mechanism. Residues asparagine 75, histidine 81, and aspartate 88 each contribute to the substrate site. Histidine 101 (proton donor) is an active-site residue. Residues 102–103 (VS) and arginine 112 contribute to the substrate site.

It belongs to the type-II 3-dehydroquinase family. As to quaternary structure, homododecamer. Adopts a ring-like structure, composed of an arrangement of two hexameric rings stacked on top of one another.

It carries out the reaction 3-dehydroquinate = 3-dehydroshikimate + H2O. The protein operates within aromatic compound metabolism; 3,4-dihydroxybenzoate biosynthesis; 3,4-dihydroxybenzoate from 3-dehydroquinate: step 1/2. Functionally, is involved in the catabolism of quinate. Allows the utilization of quinate as carbon source via the beta-ketoadipate pathway. The polypeptide is Catabolic 3-dehydroquinase (Aspergillus oryzae (strain ATCC 42149 / RIB 40) (Yellow koji mold)).